A 493-amino-acid polypeptide reads, in one-letter code: Guanosine-5'-triphosphate,3'-diphosphate pyrophosphatase (493 aa).

The protein belongs to the GppA/Ppx family. GppA subfamily.

It catalyses the reaction guanosine 3'-diphosphate 5'-triphosphate + H2O = guanosine 3',5'-bis(diphosphate) + phosphate + H(+). It participates in purine metabolism; ppGpp biosynthesis; ppGpp from GTP: step 2/2. Functionally, catalyzes the conversion of pppGpp to ppGpp. Guanosine pentaphosphate (pppGpp) is a cytoplasmic signaling molecule which together with ppGpp controls the 'stringent response', an adaptive process that allows bacteria to respond to amino acid starvation, resulting in the coordinated regulation of numerous cellular activities. The chain is Guanosine-5'-triphosphate,3'-diphosphate pyrophosphatase from Salmonella agona (strain SL483).